We begin with the raw amino-acid sequence, 293 residues long: HTH-type transcriptional regulator HdfR (293 aa).

Residues Met-1 to Thr-58 enclose the HTH lysR-type domain. The segment at residues Phe-18–Arg-37 is a DNA-binding region (H-T-H motif).

The protein belongs to the LysR transcriptional regulatory family.

Its function is as follows. Negatively regulates the transcription of the flagellar master operon flhDC by binding to the upstream region of the operon. The polypeptide is HTH-type transcriptional regulator HdfR (Yersinia pseudotuberculosis serotype O:1b (strain IP 31758)).